A 162-amino-acid polypeptide reads, in one-letter code: Blue copper protein 1b (162 aa).

The N-terminal stretch at 1–23 is a signal peptide; that stretch reads MASSRVVLILSISMVLLSSVAIA. In terms of domain architecture, Phytocyanin spans 25–125; it reads TDYIVGDDKG…QMKLVITVLA (101 aa). Histidine 65 serves as a coordination point for Cu cation. N-linked (GlcNAc...) asparagine glycosylation occurs at asparagine 71. Residues cysteine 78 and cysteine 112 are joined by a disulfide bond. Cu cation contacts are provided by cysteine 106, histidine 111, and methionine 117. The helical transmembrane segment at 142–162 threads the bilayer; sequence VVSSLFGVVMAIMVAIAVIFA.

Its subcellular location is the membrane. The polypeptide is Blue copper protein 1b (Medicago truncatula (Barrel medic)).